We begin with the raw amino-acid sequence, 879 residues long: Beta-mannosidase (879 aa).

The N-terminal stretch at 1 to 17 (MLLRLLLLLAPCGAGFA) is a signal peptide. 2 N-linked (GlcNAc...) asparagine glycosylation sites follow: Asn-35 and Asn-77. Cys-167 and Cys-176 are oxidised to a cystine. Residue 190-192 (WDW) participates in substrate binding. Asn-297 carries N-linked (GlcNAc...) asparagine glycosylation. Asn-456 provides a ligand contact to substrate. The Proton donor role is filled by Glu-457. 3 disulfide bridges follow: Cys-540–Cys-629, Cys-732–Cys-761, and Cys-764–Cys-769. The Nucleophile role is filled by Glu-554. The N-linked (GlcNAc...) asparagine glycan is linked to Asn-803.

The protein belongs to the glycosyl hydrolase 2 family. In terms of assembly, monomer. N-glycosylated. As to expression, detected in kidney (at protein level). Found in spleen and to a lesser extent in liver. Not detected in kidney or brain.

The protein resides in the lysosome. It carries out the reaction Hydrolysis of terminal, non-reducing beta-D-mannose residues in beta-D-mannosides.. Its pathway is glycan metabolism; N-glycan degradation. Exoglycosidase that cleaves the single beta-linked mannose residue from the non-reducing end of all N-linked glycoprotein oligosaccharides. This Capra hircus (Goat) protein is Beta-mannosidase (MANBA).